Consider the following 50-residue polypeptide: Omwaprin-a (50 aa).

A WAP domain is found at 3–47 (RPKKPGLCPPRPQKPCVKECKNDDSCPGQQKCCNYGCKDECRDPI). 4 disulfides stabilise this stretch: Cys10–Cys35, Cys18–Cys39, Cys22–Cys34, and Cys28–Cys43.

Belongs to the venom waprin family. In terms of tissue distribution, expressed by the venom gland.

Its subcellular location is the secreted. Its function is as follows. Damages membranes of susceptible bacteria. Has antibacterial activity against the Gram-positive bacteria B.megaterium and S.warneri. After a 45-minute treatment with this protein, B.megaterium have no visible pili and are smooth. Has no antibacterial activity against the Gram-positive bacteria B.thuringiensis, S.aureus, S.clavuligerus and B.anthracis, or the Gram-negative bacteria E.coli and A.tumefaciens. Has no hemolytic activity. Does not inhibit the proteinases elastase and cathepsin G. Is not toxic to mice. This chain is Omwaprin-a, found in Oxyuranus microlepidotus (Inland taipan).